The following is a 73-amino-acid chain: Toxin Td10 (73 aa).

Residues 1–7 (IGMVVEC) form the signal peptide. The 63-residue stretch at 8-70 (KDGYLMGPDG…VWERATNRCG (63 aa)) folds into the LCN-type CS-alpha/beta domain. 4 cysteine pairs are disulfide-bonded: C18–C69, C22–C44, C30–C50, and C34–C52. A Lysine amide modification is found at K71.

Belongs to the long (4 C-C) scorpion toxin superfamily. Sodium channel inhibitor family. Beta subfamily. Expressed by the venom gland.

The protein resides in the secreted. Its function is as follows. Beta toxins bind voltage-independently at site-4 of sodium channels (Nav) and shift the voltage of activation toward more negative potentials thereby affecting sodium channel activation and promoting spontaneous and repetitive firing. This Tityus discrepans (Venezuelan scorpion) protein is Toxin Td10.